The chain runs to 141 residues: Glutamyl-tRNA(Gln) amidotransferase subunit C, chloroplastic/mitochondrial (141 aa).

This sequence belongs to the GatC family. As to quaternary structure, subunit of the heterotrimeric GatCAB amidotransferase (AdT) complex, composed of A, B and C subunits.

It is found in the mitochondrion. It localises to the plastid. The protein localises to the chloroplast. It carries out the reaction L-glutamyl-tRNA(Gln) + L-glutamine + ATP + H2O = L-glutaminyl-tRNA(Gln) + L-glutamate + ADP + phosphate + H(+). In terms of biological role, allows the formation of correctly charged Gln-tRNA(Gln) through the transamidation of misacylated Glu-tRNA(Gln) in chloroplasts and mitochondria. The reaction takes place in the presence of glutamine and ATP through an activated gamma-phospho-Glu-tRNA(Gln). This Populus trichocarpa (Western balsam poplar) protein is Glutamyl-tRNA(Gln) amidotransferase subunit C, chloroplastic/mitochondrial.